We begin with the raw amino-acid sequence, 377 residues long: Meiotic driver cw9 (377 aa).

Disordered regions lie at residues 1 to 49 (MKNK…DLNN) and 64 to 100 (NKSTTPPDYDENRLPITDEGNNPPNTHRENHSSGTTD). Over residues 11-29 (SMDEMSAKNDNEIDLEKGP) the composition is skewed to basic and acidic residues. The next 7 membrane-spanning stretches (helical) occupy residues 105–125 (FLIKLLISFTSIILFNAPAVC), 142–162 (WTLFGFWCLVCTLALLFLTYF), 172–192 (VTIIFLAQCIKVTAVFLAQCV), 218–238 (VVIIWLLWVVICYTLFLRSKF), 252–272 (CSISAALLLFLLYVRLPFWTL), 276–296 (FSGLFQVLGVQSCVVIVTKGL), and 306–326 (ATGYEIEVSSLFVIGNFLFFY).

It belongs to the WTF family. In terms of assembly, homomer. Forms protein aggregates. The two isoforms can interact with each other and with themselves. High sequence similarity is required for their interaction.

It is found in the spore membrane. The protein resides in the vacuole membrane. The protein localises to the ascus epiplasm. Its subcellular location is the cytoplasm. It localises to the endoplasmic reticulum membrane. Functionally, promotes unequal transmission of alleles from the parental zygote to progeny spores by acting as poison/antidote system where the poison and antidote proteins are produced from the same locus; the poison component is trans-acting and targets all spores within an ascus whereas the antidote component is spore-specific, leading to poisoning of all progeny that do not inherit the allele. In terms of biological role, localizes isoform 2 to the vacuole thereby facilitating its degradation. Its function is as follows. Forms toxic aggregates that disrupt spore maturation. This chain is Meiotic driver cw9, found in Schizosaccharomyces pombe (Fission yeast).